The primary structure comprises 434 residues: Histidinol dehydrogenase (434 aa).

The NAD(+) site is built by Tyr130, Gln191, and Asn214. Substrate is bound by residues Ser237, Gln259, and His262. 2 residues coordinate Zn(2+): Gln259 and His262. Catalysis depends on proton acceptor residues Glu327 and His328. The substrate site is built by His328, Asp361, Glu415, and His420. Asp361 serves as a coordination point for Zn(2+). Residue His420 participates in Zn(2+) binding.

This sequence belongs to the histidinol dehydrogenase family. Zn(2+) is required as a cofactor.

It carries out the reaction L-histidinol + 2 NAD(+) + H2O = L-histidine + 2 NADH + 3 H(+). The protein operates within amino-acid biosynthesis; L-histidine biosynthesis; L-histidine from 5-phospho-alpha-D-ribose 1-diphosphate: step 9/9. Catalyzes the sequential NAD-dependent oxidations of L-histidinol to L-histidinaldehyde and then to L-histidine. The protein is Histidinol dehydrogenase of Cereibacter sphaeroides (strain ATCC 17023 / DSM 158 / JCM 6121 / CCUG 31486 / LMG 2827 / NBRC 12203 / NCIMB 8253 / ATH 2.4.1.) (Rhodobacter sphaeroides).